We begin with the raw amino-acid sequence, 366 residues long: Aminomethyltransferase (366 aa).

This sequence belongs to the GcvT family. As to quaternary structure, the glycine cleavage system is composed of four proteins: P, T, L and H.

It catalyses the reaction N(6)-[(R)-S(8)-aminomethyldihydrolipoyl]-L-lysyl-[protein] + (6S)-5,6,7,8-tetrahydrofolate = N(6)-[(R)-dihydrolipoyl]-L-lysyl-[protein] + (6R)-5,10-methylene-5,6,7,8-tetrahydrofolate + NH4(+). Its function is as follows. The glycine cleavage system catalyzes the degradation of glycine. The sequence is that of Aminomethyltransferase from Bacillus cereus (strain G9842).